We begin with the raw amino-acid sequence, 85 residues long: ATP synthase subunit c (85 aa).

A run of 2 helical transmembrane segments spans residues 10–30 (IAVAIIVGLCALGTAVGFAVL) and 53–73 (FIIAGLLDAVPMIGIVIALLF).

Belongs to the ATPase C chain family. As to quaternary structure, F-type ATPases have 2 components, F(1) - the catalytic core - and F(0) - the membrane proton channel. F(1) has five subunits: alpha(3), beta(3), gamma(1), delta(1), epsilon(1). F(0) has three main subunits: a(1), b(2) and c(10-14). The alpha and beta chains form an alternating ring which encloses part of the gamma chain. F(1) is attached to F(0) by a central stalk formed by the gamma and epsilon chains, while a peripheral stalk is formed by the delta and b chains.

Its subcellular location is the cell inner membrane. F(1)F(0) ATP synthase produces ATP from ADP in the presence of a proton or sodium gradient. F-type ATPases consist of two structural domains, F(1) containing the extramembraneous catalytic core and F(0) containing the membrane proton channel, linked together by a central stalk and a peripheral stalk. During catalysis, ATP synthesis in the catalytic domain of F(1) is coupled via a rotary mechanism of the central stalk subunits to proton translocation. Functionally, key component of the F(0) channel; it plays a direct role in translocation across the membrane. A homomeric c-ring of between 10-14 subunits forms the central stalk rotor element with the F(1) delta and epsilon subunits. This is ATP synthase subunit c from Vibrio vulnificus (strain CMCP6).